A 322-amino-acid chain; its full sequence is Elongation factor P--(R)-beta-lysine ligase (322 aa).

75-77 (SPE) is a binding site for substrate. 99–101 (RNE) serves as a coordination point for ATP. Y117 lines the substrate pocket. 241–242 (EL) lines the ATP pocket. Substrate is bound at residue E248. G297 is a binding site for ATP.

This sequence belongs to the class-II aminoacyl-tRNA synthetase family. EpmA subfamily. Homodimer.

It catalyses the reaction D-beta-lysine + L-lysyl-[protein] + ATP = N(6)-((3R)-3,6-diaminohexanoyl)-L-lysyl-[protein] + AMP + diphosphate + H(+). In terms of biological role, with EpmB is involved in the beta-lysylation step of the post-translational modification of translation elongation factor P (EF-P). Catalyzes the ATP-dependent activation of (R)-beta-lysine produced by EpmB, forming a lysyl-adenylate, from which the beta-lysyl moiety is then transferred to the epsilon-amino group of a conserved specific lysine residue in EF-P. This is Elongation factor P--(R)-beta-lysine ligase from Avibacterium paragallinarum (Haemophilus gallinarum).